The chain runs to 311 residues: MRLVFAGTPEFARLALEALLAAGHEIPLVLTQPDRPAGRGLKLTPSPVKEAALAAGIEVAQPRSLRLDGRYPDEALAAQARLVAVAPEVMVVAAYGLILPRWTLALPARGCLNIHASLLPRWRGAAPIQRAIEAGDARTGVTIMQMDDGLDTGDMLLERTVPIGAETTAAVLHDELARVGAEAIVAALADLPALAPRKQPEQGVTYAAKLDKAEAALKLDESAELLARRIRAFNPVPGASLRLPGLNEPVKVWQAEALPESSPAAPGTVLRASAQGVDIATGQGVLRLLELQKAGGKRQSAEVFVRGWQPA.

Residue 117 to 120 participates in (6S)-5,6,7,8-tetrahydrofolate binding; it reads SLLP.

This sequence belongs to the Fmt family.

The catalysed reaction is L-methionyl-tRNA(fMet) + (6R)-10-formyltetrahydrofolate = N-formyl-L-methionyl-tRNA(fMet) + (6S)-5,6,7,8-tetrahydrofolate + H(+). In terms of biological role, attaches a formyl group to the free amino group of methionyl-tRNA(fMet). The formyl group appears to play a dual role in the initiator identity of N-formylmethionyl-tRNA by promoting its recognition by IF2 and preventing the misappropriation of this tRNA by the elongation apparatus. The protein is Methionyl-tRNA formyltransferase of Bordetella avium (strain 197N).